Reading from the N-terminus, the 93-residue chain is Integration host factor subunit beta (93 aa).

The protein belongs to the bacterial histone-like protein family. Heterodimer of an alpha and a beta chain.

Its function is as follows. This protein is one of the two subunits of integration host factor, a specific DNA-binding protein that functions in genetic recombination as well as in transcriptional and translational control. This is Integration host factor subunit beta (ihfB) from Mannheimia haemolytica (Pasteurella haemolytica).